Reading from the N-terminus, the 883-residue chain is Serine/threonine-protein phosphatase BSL1 homolog (883 aa).

Kelch repeat units lie at residues 64 to 113 (ASSG…AVGT), 221 to 271 (MLLL…VFVG), 273 to 323 (RLHV…DHDA), and 341 to 387 (QIYI…NRNH). 3 disordered regions span residues 381 to 402 (ENQN…STDK), 430 to 466 (SHAS…SLEP), and 499 to 525 (NESR…QRSP). Over residues 385–399 (RNHNFNSDSPTTNNS) the composition is skewed to polar residues. The Mn(2+) site is built by Asp586, His588, Asp620, and Asn652. His653 functions as the Proton donor in the catalytic mechanism. Residues His705 and His784 each coordinate Mn(2+). The disordered stretch occupies residues 861-883 (QRPPTPTRGRPQSASDRNSLAYI). The span at 872 to 883 (QSASDRNSLAYI) shows a compositional bias: polar residues.

Belongs to the PPP phosphatase family. BSU subfamily. In terms of assembly, interacts with the phosphorylated form of BSK3. Requires Mn(2+) as cofactor.

It is found in the nucleus. It carries out the reaction O-phospho-L-seryl-[protein] + H2O = L-seryl-[protein] + phosphate. The enzyme catalyses O-phospho-L-threonyl-[protein] + H2O = L-threonyl-[protein] + phosphate. This Oryza sativa subsp. japonica (Rice) protein is Serine/threonine-protein phosphatase BSL1 homolog (BSL1).